The following is a 196-amino-acid chain: Aequorin-1 (196 aa).

A propeptide spanning residues 1–7 (MTSEQYS) is cleaved from the precursor. EF-hand domains are found at residues 18–53 (KWIGRHKHMFNFLDVNHNGRISLDEMVYKASDIVIN), 54–108 (NLGA…SKNQ), 111–146 (LIRLWGDALFDIIDKDQNGAISLDEWKAYTKSDGII), and 147–182 (QSSEDCEETFRVCDIDESGQLDVDEMTRQHLGFWYT). Ca(2+)-binding residues include Asp-31, Asn-33, Asn-35, Arg-37, and Glu-42. May interact with the chromophore stretches follow at residues 47–57 (ASDIVINNLGA), 62–72 (AKRHKDAVEAF), and 107–117 (NQITLIRLWGD). Residues Asp-124, Asp-126, Asn-128, Glu-135, Asp-160, Asp-162, Ser-164, Gln-166, and Glu-171 each coordinate Ca(2+).

Belongs to the aequorin family. The reduction of the disulfide bond is necessary to regenerate aequorin from apoaequorin.

Ca(2+)-dependent bioluminescence photoprotein. Displays an emission peak at 470 nm (blue light). Trace amounts of calcium ion trigger the intramolecular oxidation of the chromophore, coelenterazine into coelenteramide and CO(2) with the concomitant emission of light. The polypeptide is Aequorin-1 (Aequorea victoria (Water jellyfish)).